The chain runs to 216 residues: MOB kinase activator 3B (216 aa).

Positions 82, 87, 164, and 169 each coordinate Zn(2+).

Modulates LATS1 expression in the Hippo signaling pathway which plays a pivotal role in organ size control and tumor suppression by restricting proliferation and promoting apoptosis. This chain is MOB kinase activator 3B (Mob3b), found in Mus musculus (Mouse).